Here is a 63-residue protein sequence, read N- to C-terminus: Large ribosomal subunit protein uL29 (63 aa).

This sequence belongs to the universal ribosomal protein uL29 family.

The polypeptide is Large ribosomal subunit protein uL29 (Tolumonas auensis (strain DSM 9187 / NBRC 110442 / TA 4)).